Here is a 64-residue protein sequence, read N- to C-terminus: Chromatin protein Cren7 (64 aa).

This sequence belongs to the Cren7 family. In terms of assembly, monomer. Methylated at multiple sites, to varying extents.

It is found in the chromosome. It localises to the cytoplasm. A chromatin protein, binds double-stranded DNA without sequence specificity. Constrains negative DNA supercoils. This chain is Chromatin protein Cren7, found in Aeropyrum pernix (strain ATCC 700893 / DSM 11879 / JCM 9820 / NBRC 100138 / K1).